Here is a 269-residue protein sequence, read N- to C-terminus: uncharacterized protein (269 aa).

The span at M1–H12 shows a compositional bias: basic residues. The interval M1–V82 is disordered. Residues P21–L33 are compositionally biased toward acidic residues. Residues E34–N63 show a composition bias toward basic and acidic residues.

This is an uncharacterized protein from Dictyostelium discoideum (Social amoeba).